A 335-amino-acid polypeptide reads, in one-letter code: Urokinase plasminogen activator surface receptor (335 aa).

The N-terminal stretch at 1–22 (MGHPPLLPLLLLLHTCVPASWG) is a signal peptide. UPAR/Ly6 domains are found at residues 23–114 (LRCM…RSRY), 115–213 (LECI…PQNG), and 214–305 (RQCY…YRSG). Intrachain disulfides connect cysteine 25-cysteine 46, cysteine 28-cysteine 34, and cysteine 39-cysteine 67. N-linked (GlcNAc...) asparagine glycosylation occurs at asparagine 74. 11 disulfides stabilise this stretch: cysteine 93/cysteine 98, cysteine 117/cysteine 144, cysteine 120/cysteine 127, cysteine 137/cysteine 169, cysteine 175/cysteine 192, cysteine 193/cysteine 198, cysteine 216/cysteine 244, cysteine 219/cysteine 227, cysteine 237/cysteine 263, cysteine 269/cysteine 287, and cysteine 288/cysteine 293. N-linked (GlcNAc...) asparagine glycans are attached at residues asparagine 184, asparagine 194, asparagine 222, and asparagine 255. Glycine 305 is lipidated: GPI-anchor amidated glycine. Residues 306–335 (AAPQPGPAHLSLTITLLMTARLWGGTLLWT) constitute a propeptide, removed in mature form.

In terms of assembly, monomer. Interacts with MRC2. Interacts (via the UPAR/Ly6 domains) with SRPX2. Interacts with FAP (seprase); the interaction occurs at the cell surface of invadopodia membrane. Interacts with SORL1 (via N-terminal ectodomain); this interaction decreases PLAUR internalization. The ternary complex composed of PLAUR-PLAU-SERPINE1 also interacts with SORL1. Interacts with CD82; this interaction prevents PLAUR from binding to its high affinity ligand PLAU. As to expression, expressed in neurons of the rolandic area of the brain (at protein level). Expressed in the brain.

It localises to the cell membrane. The protein resides in the cell projection. It is found in the invadopodium membrane. Its subcellular location is the secreted. Acts as a receptor for urokinase plasminogen activator. Plays a role in localizing and promoting plasmin formation. Mediates the proteolysis-independent signal transduction activation effects of U-PA. It is subject to negative-feedback regulation by U-PA which cleaves it into an inactive form. The sequence is that of Urokinase plasminogen activator surface receptor (PLAUR) from Homo sapiens (Human).